The sequence spans 168 residues: Plastocyanin, chloroplastic (168 aa).

Residues 1–70 constitute a chloroplast transit peptide; that stretch reads MASVAAAAVS…SSLLLVASAN (70 aa). A Plastocyanin-like domain is found at 71-168; sequence AATVKMGGDD…AGMKGVVTVS (98 aa). Cu cation is bound by residues H108, C153, H156, and M161.

Belongs to the plastocyanin family. Cu(2+) serves as cofactor.

The protein resides in the plastid. Its subcellular location is the chloroplast thylakoid membrane. Its function is as follows. Participates in electron transfer between P700 and the cytochrome b6-f complex in photosystem I. In Physcomitrium patens (Spreading-leaved earth moss), this protein is Plastocyanin, chloroplastic (PETE).